We begin with the raw amino-acid sequence, 222 residues long: Glutathione S-transferase alpha-2 (222 aa).

The GST N-terminal domain maps to glycine 3–glycine 83. Lysine 4 carries the post-translational modification N6-succinyllysine. Residues tyrosine 9, lysine 45, glutamine 54 to valine 55, and glutamine 67 to threonine 68 contribute to the glutathione site. The region spanning aspartate 85–methionine 208 is the GST C-terminal domain.

This sequence belongs to the GST superfamily. Alpha family. Homodimer or heterodimer of GSTA1 and GSTA2.

The protein localises to the cytoplasm. The enzyme catalyses RX + glutathione = an S-substituted glutathione + a halide anion + H(+). In terms of biological role, catalyzes the conjugation of glutathione to a large variety of electrophilic compounds. The chain is Glutathione S-transferase alpha-2 (Gsta2) from Rattus norvegicus (Rat).